The primary structure comprises 675 residues: Alpha-1,4-glucan:maltose-1-phosphate maltosyltransferase 1 (675 aa).

Positions 264, 324, and 359 each coordinate alpha-maltose 1-phosphate. D394 functions as the Nucleophile in the catalytic mechanism. N395 contacts alpha-maltose 1-phosphate. The active-site Proton donor is the E423. 534–535 (KY) contacts alpha-maltose 1-phosphate.

It belongs to the glycosyl hydrolase 13 family. GlgE subfamily. In terms of assembly, homodimer.

It catalyses the reaction alpha-maltose 1-phosphate + [(1-&gt;4)-alpha-D-glucosyl](n) = [(1-&gt;4)-alpha-D-glucosyl](n+2) + phosphate. Is competitively inhibited by alpha-, beta- and gamma-cyclodextrins (cyclic maltooligosaccharides), unlike GlgE from M.tuberculosis. Functionally, maltosyltransferase that uses maltose 1-phosphate (M1P) as the sugar donor to elongate linear or branched alpha-(1-&gt;4)-glucans. Maltooligosaccharides with a degree of polymerization (DP) superior or equal to 4 are efficient acceptors, with DP6 being optimal in the GlgE-catalyzed polymerization with M1P. Is specific for the alpha-anomer of M1P as substrate, since the beta-anomer of M1P gives no activity. Alpha-D-glucose 1-phosphate cannot serve as a donor substrate, but alpha-maltosyl fluoride is an efficient donor in vitro. Exhibits an alpha-retaining catalytic mechanism, with evidence that maltooligosaccharide acceptors are extended at their non-reducing ends. Is also able to catalyze the reverse reaction in vitro, releasing M1P from glycogen or maltoheptaose in the presence of inorganic phosphate. Also catalyzes disproportionation reactions through maltosyl transfer between maltooligosaccharides. Is probably involved in a branched alpha-glucan biosynthetic pathway from trehalose, together with TreS, Mak and GlgB. The protein is Alpha-1,4-glucan:maltose-1-phosphate maltosyltransferase 1 (glgE1) of Streptomyces coelicolor (strain ATCC BAA-471 / A3(2) / M145).